We begin with the raw amino-acid sequence, 586 residues long: ATPase family AAA domain-containing protein 3A (586 aa).

2 disordered regions span residues 1-55 (MSWL…PTGL) and 111-134 (QAEE…QYQD). Serine 2 carries the post-translational modification N-acetylserine. The required for interaction with the inner surface of the mitochondrial outer membrane stretch occupies residues 2-50 (SWLFGINKGPKGEGAGPPPPLPPAQPGAEGGGDRGLGDRPAPKDKWSNF). Residues 2–246 (SWLFGINKGP…FRAFVTDWDK (245 aa)) are Mitochondrial intermembrane-facing. A compositionally biased stretch (pro residues) spans 17-26 (GPPPPLPPAQ). Composition is skewed to basic and acidic residues over residues 32-48 (GGDR…DKWS) and 111-125 (QAEE…ETRQ). Positions 86–219 (QLEQQSKLKE…QIRLKAAEHR (134 aa)) form a coiled coil. Residues 247-264 (VTATVAGLTLLAVGVYSA) form a helical membrane-spanning segment. The Mitochondrial matrix segment spans residues 265 to 586 (KNATLVAGRF…PGRGDEPSPS (322 aa)). Residues 290–305 (RITVLEALRHPIQVSR) form an S100B-binding region. Serine 321 is subject to Phosphoserine. ATP is bound at residue 352–359 (GPPGTGKT). An N6-acetyllysine modification is found at lysine 491.

It belongs to the AAA ATPase family. As to quaternary structure, can form homooligomers. Homodimer formation at the N-terminus may be regulated by ATP and is required for the interaction with the inner surface of the mitochondrial outer membrane and correct mitochondrial homeostasis. Interacts with components of the mitochondrial ribosome and with other proteins involved in mitochondrial RNA metabolism. May also interact with protein involved in lipid metabolism, including STARD9. May interact with FAM210A. Interacts with GADD45GIP1. Interacts with S100B in a Ca(+2)- and Zn(+2)-dependent manner; this interaction probably occurs in the cytosol prior to mitochondrial targeting. S100B could assist ATAD3A cytoplasmic processing, preventing aggregation and favoring mitochondrial localization. Interacts with HSP60/HSPD1. Forms heterooligomers with ATAD3B; this interaction may affect ATAD3A activity. Interacts with CLPB. Interacts with EIF2AK3/PERK; ATAD3A and EIF2S1/eIF-2-alpha occupy a common binding site within the cytoplasmic loop of EIF2AK3/PERK, leading to prevent EIF2AK3/PERK association with its substrate EIF2S1/eIF-2-alpha. Overexpressed in lung adenocarcinomas (at protein level).

Its subcellular location is the mitochondrion inner membrane. It is found in the mitochondrion matrix. It localises to the mitochondrion nucleoid. The catalysed reaction is ATP + H2O = ADP + phosphate + H(+). Its function is as follows. Essential for mitochondrial network organization, mitochondrial metabolism and cell growth at organism and cellular level. May play an important role in mitochondrial protein synthesis. May also participate in mitochondrial DNA replication. May bind to mitochondrial DNA D-loops and contribute to nucleoid stability. Required for enhanced channeling of cholesterol for hormone-dependent steroidogenesis. Involved in mitochondrial-mediated antiviral innate immunity. Required to protect mitochondria from the PERK-mediated unfolded protein response: specifically inhibits the activity of EIF2AK3/PERK at mitochondria-endoplasmic reticulum contact sites, thereby providing a safe haven for mitochondrial protein translation during endoplasmic reticulum stress. Ability to inhibit EIF2AK3/PERK is independent of its ATPase activity. Also involved in the mitochondrial DNA damage response by promoting signaling between damaged genomes and the mitochondrial membrane, leading to activation of the integrated stress response (ISR). This is ATPase family AAA domain-containing protein 3A from Homo sapiens (Human).